The chain runs to 138 residues: Ribosomal RNA large subunit methyltransferase H (138 aa).

S-adenosyl-L-methionine is bound by residues Leu-57, Gly-86, and 105 to 110 (LSPLTF).

It belongs to the RNA methyltransferase RlmH family. As to quaternary structure, homodimer.

Its subcellular location is the cytoplasm. It carries out the reaction pseudouridine(1915) in 23S rRNA + S-adenosyl-L-methionine = N(3)-methylpseudouridine(1915) in 23S rRNA + S-adenosyl-L-homocysteine + H(+). In terms of biological role, specifically methylates the pseudouridine at position 1915 (m3Psi1915) in 23S rRNA. The sequence is that of Ribosomal RNA large subunit methyltransferase H from Prochlorococcus marinus (strain MIT 9301).